A 310-amino-acid polypeptide reads, in one-letter code: N-acetylmuramic acid 6-phosphate etherase (310 aa).

The 164-residue stretch at Ile64–Lys227 folds into the SIS domain. Glu92 serves as the catalytic Proton donor. Glu123 is an active-site residue.

The protein belongs to the GCKR-like family. MurNAc-6-P etherase subfamily. Homodimer.

It carries out the reaction N-acetyl-D-muramate 6-phosphate + H2O = N-acetyl-D-glucosamine 6-phosphate + (R)-lactate. Its pathway is amino-sugar metabolism; N-acetylmuramate degradation. In terms of biological role, specifically catalyzes the cleavage of the D-lactyl ether substituent of MurNAc 6-phosphate, producing GlcNAc 6-phosphate and D-lactate. This is N-acetylmuramic acid 6-phosphate etherase from Prochlorococcus marinus (strain NATL2A).